Reading from the N-terminus, the 222-residue chain is Octanoyltransferase (222 aa).

In terms of domain architecture, BPL/LPL catalytic spans 34-214; that stretch reads GEKNSTVLIL…EFSKHDEALV (181 aa). Substrate contacts are provided by residues 72-79, 144-146, and 157-159; these read RGGKLTWH, AIG, and GVA. The Acyl-thioester intermediate role is filled by C175.

Belongs to the LipB family.

The protein localises to the cytoplasm. The catalysed reaction is octanoyl-[ACP] + L-lysyl-[protein] = N(6)-octanoyl-L-lysyl-[protein] + holo-[ACP] + H(+). It functions in the pathway protein modification; protein lipoylation via endogenous pathway; protein N(6)-(lipoyl)lysine from octanoyl-[acyl-carrier-protein]: step 1/2. Catalyzes the transfer of endogenously produced octanoic acid from octanoyl-acyl-carrier-protein onto the lipoyl domains of lipoate-dependent enzymes. Lipoyl-ACP can also act as a substrate although octanoyl-ACP is likely to be the physiological substrate. The protein is Octanoyltransferase of Paenarthrobacter aurescens (strain TC1).